The sequence spans 72 residues: Translation initiation factor IF-1 (72 aa).

The 72-residue stretch at 1–72 (MSKEDVIEMQ…TRGRITWRAK (72 aa)) folds into the S1-like domain.

The protein belongs to the IF-1 family. Component of the 30S ribosomal translation pre-initiation complex which assembles on the 30S ribosome in the order IF-2 and IF-3, IF-1 and N-formylmethionyl-tRNA(fMet); mRNA recruitment can occur at any time during PIC assembly.

It localises to the cytoplasm. In terms of biological role, one of the essential components for the initiation of protein synthesis. Stabilizes the binding of IF-2 and IF-3 on the 30S subunit to which N-formylmethionyl-tRNA(fMet) subsequently binds. Helps modulate mRNA selection, yielding the 30S pre-initiation complex (PIC). Upon addition of the 50S ribosomal subunit IF-1, IF-2 and IF-3 are released leaving the mature 70S translation initiation complex. The protein is Translation initiation factor IF-1 of Clostridium acetobutylicum (strain ATCC 824 / DSM 792 / JCM 1419 / IAM 19013 / LMG 5710 / NBRC 13948 / NRRL B-527 / VKM B-1787 / 2291 / W).